A 428-amino-acid polypeptide reads, in one-letter code: Serine--tRNA ligase (428 aa).

L-serine is bound at residue 235–237 (TAE). 266–268 (RSE) serves as a coordination point for ATP. Residue E289 coordinates L-serine. 353 to 356 (EISS) provides a ligand contact to ATP. Residue S389 participates in L-serine binding.

This sequence belongs to the class-II aminoacyl-tRNA synthetase family. Type-1 seryl-tRNA synthetase subfamily. In terms of assembly, homodimer. The tRNA molecule binds across the dimer.

The protein resides in the cytoplasm. The enzyme catalyses tRNA(Ser) + L-serine + ATP = L-seryl-tRNA(Ser) + AMP + diphosphate + H(+). The catalysed reaction is tRNA(Sec) + L-serine + ATP = L-seryl-tRNA(Sec) + AMP + diphosphate + H(+). It participates in aminoacyl-tRNA biosynthesis; selenocysteinyl-tRNA(Sec) biosynthesis; L-seryl-tRNA(Sec) from L-serine and tRNA(Sec): step 1/1. Functionally, catalyzes the attachment of serine to tRNA(Ser). Is also able to aminoacylate tRNA(Sec) with serine, to form the misacylated tRNA L-seryl-tRNA(Sec), which will be further converted into selenocysteinyl-tRNA(Sec). The chain is Serine--tRNA ligase from Shewanella loihica (strain ATCC BAA-1088 / PV-4).